A 302-amino-acid polypeptide reads, in one-letter code: Giardin subunit alpha-5 (302 aa).

Annexin repeat units lie at residues 1–72 (MTST…VNMW), 74–144 (SRHE…VAGW), 153–226 (GSVE…AAHF), and 230–298 (GLPV…TLWR).

The protein belongs to the annexin family. Giardin subunit alpha subfamily.

The protein localises to the cytoplasm. It localises to the cytoskeleton. Functionally, giardins are involved in parasite attachment to the intestinal mucosa and in the cytoskeletal disassembly and reassembly that marks the transition from infectious trophozoite to transmissible cyst. They may interact with other cytoskeletal proteins such as microtubules in the microribbons or crossbridges, to maintain the integrity of the ventral disk. This is Giardin subunit alpha-5 from Giardia intestinalis (Giardia lamblia).